The following is a 260-amino-acid chain: Cytochrome c1-2, heme protein, mitochondrial (260 aa).

The transit peptide at 1 to 17 (IGAGVSGLLGFATVASA) directs the protein to the mitochondrion. The Mitochondrial intermembrane segment spans residues 18–221 (DEAEHGLECP…AAEPEMEERK (204 aa)). Positions 43–150 (ASIRRGHQVY…NGQNYVFALL (108 aa)) constitute a Cytochrome c domain. 4 residues coordinate heme c: Cys56, Cys59, His60, and Met179. The helical transmembrane segment at 222 to 241 (LMGFKWIFVLSLALLQAAYY) threads the bilayer. Topologically, residues 242-260 (RRLRWSVLKSRKLVLDVVN) are mitochondrial matrix.

The protein belongs to the cytochrome c family. Component of the ubiquinol-cytochrome c oxidoreductase (cytochrome b-c1 complex, complex III, CIII), a multisubunit enzyme composed of 3 respiratory subunits cytochrome b, cytochrome c1 and Rieske protein, 2 core protein subunits, and additional low-molecular weight protein subunits. The complex exists as an obligatory dimer and forms supercomplexes (SCs) in the inner mitochondrial membrane with cytochrome c oxidase (complex IV, CIV). Requires heme c as cofactor. As to expression, in all tissues analyzed.

It localises to the mitochondrion inner membrane. The catalysed reaction is a quinol + 2 Fe(III)-[cytochrome c](out) = a quinone + 2 Fe(II)-[cytochrome c](out) + 2 H(+)(out). In terms of biological role, component of the ubiquinol-cytochrome c oxidoreductase, a multisubunit transmembrane complex that is part of the mitochondrial electron transport chain which drives oxidative phosphorylation. The respiratory chain contains 3 multisubunit complexes succinate dehydrogenase (complex II, CII), ubiquinol-cytochrome c oxidoreductase (cytochrome b-c1 complex, complex III, CIII) and cytochrome c oxidase (complex IV, CIV), that cooperate to transfer electrons derived from NADH and succinate to molecular oxygen, creating an electrochemical gradient over the inner membrane that drives transmembrane transport and the ATP synthase. The cytochrome b-c1 complex catalyzes electron transfer from ubiquinol to cytochrome c, linking this redox reaction to translocation of protons across the mitochondrial inner membrane, with protons being carried across the membrane as hydrogens on the quinol. In the process called Q cycle, 2 protons are consumed from the matrix, 4 protons are released into the intermembrane space and 2 electrons are passed to cytochrome c. Cytochrome c1 is a catalytic core subunit containing a c-type heme. It transfers electrons from the [2Fe-2S] iron-sulfur cluster of the Rieske protein to cytochrome c. The sequence is that of Cytochrome c1-2, heme protein, mitochondrial (CYCL) from Solanum tuberosum (Potato).